Reading from the N-terminus, the 437-residue chain is Putative ABC transporter ATP-binding protein CTC_00753 (437 aa).

ABC transporter domains lie at 1-143 and 179-416; these read MERE…LPTI and LKFK…QISK. Position 219–226 (219–226) interacts with ATP; it reads GENGAGKS.

Belongs to the ABC transporter superfamily.

Its subcellular location is the cell membrane. Functionally, probably part of an ABC transporter complex. Responsible for energy coupling to the transport system. In Clostridium tetani (strain Massachusetts / E88), this protein is Putative ABC transporter ATP-binding protein CTC_00753.